A 672-amino-acid polypeptide reads, in one-letter code: uncharacterized protein (672 aa).

The N-terminal stretch at 1–24 is a signal peptide; it reads MKTLKVLKIFIIVYISSVSLESFA. A run of 2 helical transmembrane segments spans residues 226–246 and 254–274; these read IIGAALILYTMFFAFNMALNK and ITLFIIKFLFVVYFSIGLGPL. A compositionally biased stretch (polar residues) spans 363 to 372; sequence SNGTSGNNKP. The interval 363–384 is disordered; sequence SNGTSGNNKPIPNFDPDGKKDR. 4 helical membrane-spanning segments follow: residues 410-430, 436-456, 469-489, and 562-582; these read IILVAGMVFSVIFLSILLYFI, CMVTIYVMTYISPIFIPMVLF, VCISCALQPAVVAGFIALLIT, and VVSILAELLCVLIFSVIFYYF. Basic and acidic residues predominate over residues 628–646; sequence HGKSSLGDKPDIGNKRKDG. The tract at residues 628–672 is disordered; the sequence is HGKSSLGDKPDIGNKRKDGAQQGEDAVNSSGGEVADLASGSGGGK.

Belongs to the TrbL/VirB6 family.

The protein resides in the cell membrane. This is an uncharacterized protein from Rickettsia prowazekii (strain Madrid E).